The sequence spans 149 residues: UPF0178 protein CPF_2548 (149 aa).

This sequence belongs to the UPF0178 family.

The chain is UPF0178 protein CPF_2548 from Clostridium perfringens (strain ATCC 13124 / DSM 756 / JCM 1290 / NCIMB 6125 / NCTC 8237 / Type A).